A 204-amino-acid chain; its full sequence is Holliday junction branch migration complex subunit RuvA (204 aa).

Positions 1–64 are domain I; that stretch reads MIARLRGTLL…EDGQTLFGFR (64 aa). The domain II stretch occupies residues 65 to 143; it reads TRAERDLFRR…GVGGGSTAAP (79 aa). Residues 144 to 153 form a flexible linker region; that stretch reads AAGADHPTGE. A domain III region spans residues 153–204; it reads ENDPVSEAIEGLVALGYKPPEAARMARNAAEPELGCEAIIRRALQRAVPRGG.

Belongs to the RuvA family. In terms of assembly, homotetramer. Forms an RuvA(8)-RuvB(12)-Holliday junction (HJ) complex. HJ DNA is sandwiched between 2 RuvA tetramers; dsDNA enters through RuvA and exits via RuvB. An RuvB hexamer assembles on each DNA strand where it exits the tetramer. Each RuvB hexamer is contacted by two RuvA subunits (via domain III) on 2 adjacent RuvB subunits; this complex drives branch migration. In the full resolvosome a probable DNA-RuvA(4)-RuvB(12)-RuvC(2) complex forms which resolves the HJ.

It localises to the cytoplasm. Its function is as follows. The RuvA-RuvB-RuvC complex processes Holliday junction (HJ) DNA during genetic recombination and DNA repair, while the RuvA-RuvB complex plays an important role in the rescue of blocked DNA replication forks via replication fork reversal (RFR). RuvA specifically binds to HJ cruciform DNA, conferring on it an open structure. The RuvB hexamer acts as an ATP-dependent pump, pulling dsDNA into and through the RuvAB complex. HJ branch migration allows RuvC to scan DNA until it finds its consensus sequence, where it cleaves and resolves the cruciform DNA. In Halorhodospira halophila (strain DSM 244 / SL1) (Ectothiorhodospira halophila (strain DSM 244 / SL1)), this protein is Holliday junction branch migration complex subunit RuvA.